The following is a 610-amino-acid chain: Methionine--tRNA ligase (610 aa).

The 'HIGH' region motif lies at 12 to 22 (PYANGPRHIGH). Zn(2+)-binding residues include Cys144, Cys147, Cys157, and Cys160. A 'KMSKS' region motif is present at residues 348-352 (KFSSS). Ser351 is a binding site for ATP.

This sequence belongs to the class-I aminoacyl-tRNA synthetase family. MetG type 1 subfamily. As to quaternary structure, monomer. Zn(2+) is required as a cofactor.

It is found in the cytoplasm. It carries out the reaction tRNA(Met) + L-methionine + ATP = L-methionyl-tRNA(Met) + AMP + diphosphate. In terms of biological role, is required not only for elongation of protein synthesis but also for the initiation of all mRNA translation through initiator tRNA(fMet) aminoacylation. The polypeptide is Methionine--tRNA ligase (Corynebacterium diphtheriae (strain ATCC 700971 / NCTC 13129 / Biotype gravis)).